A 242-amino-acid chain; its full sequence is Eukaryotic translation initiation factor 3 subunit J (242 aa).

Residues 1-10 (MASWDDEDFE) show a composition bias toward acidic residues. Disordered stretches follow at residues 1–58 (MASW…KAQR), 71–97 (MKLK…MMNA), and 201–242 (REEK…DDFM). Residues 11–21 (VPAAATPAVPA) are compositionally biased toward low complexity. Positions 23-38 (WDDDEEEDVMDSWDAE) are enriched in acidic residues. Residues 71–89 (MKLKPEDASTKRDRQRQAE) show a composition bias toward basic and acidic residues.

This sequence belongs to the eIF-3 subunit J family. Component of the eukaryotic translation initiation factor 3 (eIF-3) complex.

The protein localises to the cytoplasm. Its function is as follows. Component of the eukaryotic translation initiation factor 3 (eIF-3) complex, which is involved in protein synthesis of a specialized repertoire of mRNAs and, together with other initiation factors, stimulates binding of mRNA and methionyl-tRNAi to the 40S ribosome. The eIF-3 complex specifically targets and initiates translation of a subset of mRNAs involved in cell proliferation. This chain is Eukaryotic translation initiation factor 3 subunit J, found in Yarrowia lipolytica (strain CLIB 122 / E 150) (Yeast).